Reading from the N-terminus, the 150-residue chain is SsrA-binding protein (150 aa).

This sequence belongs to the SmpB family.

It localises to the cytoplasm. In terms of biological role, required for rescue of stalled ribosomes mediated by trans-translation. Binds to transfer-messenger RNA (tmRNA), required for stable association of tmRNA with ribosomes. tmRNA and SmpB together mimic tRNA shape, replacing the anticodon stem-loop with SmpB. tmRNA is encoded by the ssrA gene; the 2 termini fold to resemble tRNA(Ala) and it encodes a 'tag peptide', a short internal open reading frame. During trans-translation Ala-aminoacylated tmRNA acts like a tRNA, entering the A-site of stalled ribosomes, displacing the stalled mRNA. The ribosome then switches to translate the ORF on the tmRNA; the nascent peptide is terminated with the 'tag peptide' encoded by the tmRNA and targeted for degradation. The ribosome is freed to recommence translation, which seems to be the essential function of trans-translation. The polypeptide is SsrA-binding protein (Flavobacterium psychrophilum (strain ATCC 49511 / DSM 21280 / CIP 103535 / JIP02/86)).